Reading from the N-terminus, the 301-residue chain is Fluoroquinolones export ATP-binding protein Rv2688c (301 aa).

The region spanning 18-246 (IRVRGLTFRY…RSRRRVRVEY (229 aa)) is the ABC transporter domain. ATP is bound at residue 52–59 (GPSGAGKS).

Belongs to the ABC transporter superfamily. In terms of assembly, the complex is composed of 2 ATP-binding proteins (Rv2688c) and 2 transmembrane proteins (Rv2686c and Rv2687c).

The protein resides in the cell membrane. With respect to regulation, inhibited by reserpine and verapamil. Part of the ABC transporter complex Rv2686c/Rv2687c/Rv2688c involved in fluoroquinolones export. Confers resistance to ciprofloxacin and, to a lesser extent, norfloxacin, moxifloxacin and sparfloxacin. Probably responsible for energy coupling to the transport system. The polypeptide is Fluoroquinolones export ATP-binding protein Rv2688c (Mycobacterium tuberculosis (strain ATCC 25618 / H37Rv)).